Here is a 397-residue protein sequence, read N- to C-terminus: MNIHEYQAKALLRQYGAPVSDGRVVMKADEAKAAAGELDGPLWVVKAQIHAGGRGKGHFKEKEAGEKGGVRLAKSVEEAEELARQMLGRTLVTHQTGETGKQVNRIYIEDGSDIERELYLALLVDRGTSRVSFVASTEGGMDIEEVAASTPEKIVSFSVDPASGLSDFHGRRVAFALGLSGAQVKQCVALVKNLYRMFIEKDMEMLEINPLIVMKDGNLKALDAKMGFDNNALYRQPDILALRDETEEDPKELAASKFDLNYIALDGEIGCMVNGAGLAMATMDIIKLFGAEPANFLDVGGGATKEKVTEAFKIITSDPNVKGILVNIFGGIMRCDIIAEGIIAAVKEVGLQVPLVVRLEGTNVELGKQIIGESGLNVIAADDLSDAAQKIVKAVKG.

The region spanning 9-254 (KALLRQYGAP…ETEEDPKELA (246 aa)) is the ATP-grasp domain. ATP contacts are provided by residues Lys46, 53-55 (GRG), Glu109, Ser112, and Glu117. Positions 209 and 223 each coordinate Mg(2+). Residues Asn274 and 331-333 (GIM) contribute to the substrate site.

It belongs to the succinate/malate CoA ligase beta subunit family. In terms of assembly, heterotetramer of two alpha and two beta subunits. The cofactor is Mg(2+).

It catalyses the reaction succinate + ATP + CoA = succinyl-CoA + ADP + phosphate. It carries out the reaction GTP + succinate + CoA = succinyl-CoA + GDP + phosphate. It functions in the pathway carbohydrate metabolism; tricarboxylic acid cycle; succinate from succinyl-CoA (ligase route): step 1/1. Its function is as follows. Succinyl-CoA synthetase functions in the citric acid cycle (TCA), coupling the hydrolysis of succinyl-CoA to the synthesis of either ATP or GTP and thus represents the only step of substrate-level phosphorylation in the TCA. The beta subunit provides nucleotide specificity of the enzyme and binds the substrate succinate, while the binding sites for coenzyme A and phosphate are found in the alpha subunit. The chain is Succinate--CoA ligase [ADP-forming] subunit beta from Paracoccus denitrificans (strain Pd 1222).